A 217-amino-acid chain; its full sequence is Large ribosomal subunit protein uL1 (217 aa).

It belongs to the universal ribosomal protein uL1 family.

In Candida glabrata (strain ATCC 2001 / BCRC 20586 / JCM 3761 / NBRC 0622 / NRRL Y-65 / CBS 138) (Yeast), this protein is Large ribosomal subunit protein uL1 (RPL10A).